We begin with the raw amino-acid sequence, 497 residues long: Cobyrinate a,c-diamide synthase (497 aa).

Residues 273–478 enclose the GATase cobBQ-type domain; the sequence is RIGIALDEAF…AHLHGVAYRE (206 aa). The active-site Nucleophile is cysteine 355.

Belongs to the CobB/CbiA family. It depends on Mg(2+) as a cofactor.

The catalysed reaction is cob(II)yrinate + 2 L-glutamine + 2 ATP + 2 H2O = cob(II)yrinate a,c diamide + 2 L-glutamate + 2 ADP + 2 phosphate + 2 H(+). The enzyme catalyses Ni-sirohydrochlorin + 2 L-glutamine + 2 ATP + 2 H2O = Ni-sirohydrochlorin a,c-diamide + 2 L-glutamate + 2 ADP + 2 phosphate + 2 H(+). It functions in the pathway cofactor biosynthesis; adenosylcobalamin biosynthesis; cob(II)yrinate a,c-diamide from sirohydrochlorin (anaerobic route): step 10/10. Functionally, catalyzes the ATP-dependent amidation of the two carboxylate groups at positions a and c of cobyrinate, using either L-glutamine or ammonia as the nitrogen source (Potential). Involved in the biosynthesis of the unique nickel-containing tetrapyrrole coenzyme F430, the prosthetic group of methyl-coenzyme M reductase (MCR), which plays a key role in methanogenesis and anaerobic methane oxidation. Catalyzes the ATP-dependent amidation of the two carboxylate groups at positions a and c of Ni-sirohydrochlorin, using L-glutamine or ammonia as the nitrogen source. The chain is Cobyrinate a,c-diamide synthase from Methanosarcina acetivorans (strain ATCC 35395 / DSM 2834 / JCM 12185 / C2A).